Here is a 521-residue protein sequence, read N- to C-terminus: Maturase K (521 aa).

The protein belongs to the intron maturase 2 family. MatK subfamily.

It localises to the plastid. The protein localises to the chloroplast. Functionally, usually encoded in the trnK tRNA gene intron. Probably assists in splicing its own and other chloroplast group II introns. The protein is Maturase K of Trillium erectum (Beth root).